Reading from the N-terminus, the 115-residue chain is Large ribosomal subunit protein bL19 (115 aa).

The protein belongs to the bacterial ribosomal protein bL19 family.

Its function is as follows. This protein is located at the 30S-50S ribosomal subunit interface and may play a role in the structure and function of the aminoacyl-tRNA binding site. In Alkaliphilus oremlandii (strain OhILAs) (Clostridium oremlandii (strain OhILAs)), this protein is Large ribosomal subunit protein bL19.